The sequence spans 298 residues: Quinolinate synthase (298 aa).

Residues His-19 and Ser-36 each coordinate iminosuccinate. Cys-81 provides a ligand contact to [4Fe-4S] cluster. Iminosuccinate-binding positions include 107 to 109 (YVN) and Ser-124. Cys-168 is a [4Fe-4S] cluster binding site. Iminosuccinate-binding positions include 193-195 (HPE) and Thr-210. Cys-254 is a binding site for [4Fe-4S] cluster.

This sequence belongs to the quinolinate synthase family. Type 2 subfamily. It depends on [4Fe-4S] cluster as a cofactor.

The protein localises to the cytoplasm. It carries out the reaction iminosuccinate + dihydroxyacetone phosphate = quinolinate + phosphate + 2 H2O + H(+). Its pathway is cofactor biosynthesis; NAD(+) biosynthesis; quinolinate from iminoaspartate: step 1/1. Its function is as follows. Catalyzes the condensation of iminoaspartate with dihydroxyacetone phosphate to form quinolinate. This Thermotoga sp. (strain RQ2) protein is Quinolinate synthase.